The primary structure comprises 1131 residues: Tyrosine-protein kinase JAK2 (1131 aa).

Residues 1–239 (MGMACLTMTE…RYRFRRFIEQ (239 aa)) are interaction with cytokine/interferon/growth hormone receptors. Residues 37–380 (PVLQVYLYHS…GYYRLTADAH (344 aa)) form the FERM domain. A Phosphotyrosine; by autocatalysis modification is found at Y119. Phosphotyrosine is present on residues Y372 and Y373. The region spanning 401 to 482 (HGPISMDFAI…NLKDLLNCYQ (82 aa)) is the SH2; atypical domain. The residue at position 523 (S523) is a Phosphoserine. One can recognise a Protein kinase 1 domain in the interval 545–809 (LIFNESLGQG…AIIRDLNSLF (265 aa)). 2 positions are modified to phosphotyrosine: Y570 and Y813. Residues 849–1126 (LKFLQQLGKG…RDLALRVDQI (278 aa)) enclose the Protein kinase 2 domain. Position 855-863 (855-863 (LGKGNFGSV)) interacts with ATP. A Phosphotyrosine; by autocatalysis modification is found at Y868. Residue K882 participates in ATP binding. A phosphotyrosine; by autocatalysis mark is found at Y966 and Y972. D976 serves as the catalytic Proton acceptor. 2 positions are modified to phosphotyrosine; by autocatalysis: Y1007 and Y1008.

This sequence belongs to the protein kinase superfamily. Tyr protein kinase family. JAK subfamily. Interacts with IL23R, SKB1 and STAM2. Interacts with EPOR. Interacts with LYN. Interacts with SIRPA. Interacts with SH2B1. Interacts with TEC. Interacts with IFNGR2 (via intracellular domain). Interacts with LEPR (Isoform B). Interacts with HSP90AB1; promotes functional activation in a heat shock-dependent manner. Interacts with STRA6. Interacts with ASB2; the interaction targets JAK2 for Notch-induced proteasomal degradation. Mg(2+) serves as cofactor. In terms of processing, autophosphorylated, leading to regulate its activity. Leptin promotes phosphorylation on tyrosine residues, including phosphorylation on Tyr-813. Autophosphorylation on Tyr-119 in response to EPO down-regulates its kinase activity. Autophosphorylation on Tyr-868, Tyr-966 and Tyr-972 in response to growth hormone (GH) are required for maximal kinase activity. Also phosphorylated by TEC. Phosphorylated on tyrosine residues in response to interferon gamma signaling. Phosphorylated on tyrosine residues in response to a signaling cascade that is activated by increased cellular retinol. Undergoes Notch-induced ubiquitination and subsequent proteasomal degradation which is mediated by ASB1 or ASB2, the substrate-recognition components of probable ECS E3 ubiquitin-protein ligase complexes.

The protein localises to the endomembrane system. It is found in the cytoplasm. It localises to the nucleus. The enzyme catalyses L-tyrosyl-[protein] + ATP = O-phospho-L-tyrosyl-[protein] + ADP + H(+). Regulated by autophosphorylation, can both activate or decrease activity. Heme regulates its activity by enhancing the phosphorylation on Tyr-1007 and Tyr-1008. Non-receptor tyrosine kinase involved in various processes such as cell growth, development, differentiation or histone modifications. Mediates essential signaling events in both innate and adaptive immunity. In the cytoplasm, plays a pivotal role in signal transduction via its association with type I receptors such as growth hormone (GHR), prolactin (PRLR), leptin (LEPR), erythropoietin (EPOR), thrombopoietin (THPO); or type II receptors including IFN-alpha, IFN-beta, IFN-gamma and multiple interleukins. Following ligand-binding to cell surface receptors, phosphorylates specific tyrosine residues on the cytoplasmic tails of the receptor, creating docking sites for STATs proteins. Subsequently, phosphorylates the STATs proteins once they are recruited to the receptor. Phosphorylated STATs then form homodimer or heterodimers and translocate to the nucleus to activate gene transcription. For example, cell stimulation with erythropoietin (EPO) during erythropoiesis leads to JAK2 autophosphorylation, activation, and its association with erythropoietin receptor (EPOR) that becomes phosphorylated in its cytoplasmic domain. Then, STAT5 (STAT5A or STAT5B) is recruited, phosphorylated and activated by JAK2. Once activated, dimerized STAT5 translocates into the nucleus and promotes the transcription of several essential genes involved in the modulation of erythropoiesis. Part of a signaling cascade that is activated by increased cellular retinol and that leads to the activation of STAT5 (STAT5A or STAT5B). In addition, JAK2 mediates angiotensin-2-induced ARHGEF1 phosphorylation. Plays a role in cell cycle by phosphorylating CDKN1B. Cooperates with TEC through reciprocal phosphorylation to mediate cytokine-driven activation of FOS transcription. In the nucleus, plays a key role in chromatin by specifically mediating phosphorylation of 'Tyr-41' of histone H3 (H3Y41ph), a specific tag that promotes exclusion of CBX5 (HP1 alpha) from chromatin. Up-regulates the potassium voltage-gated channel activity of KCNA3. The protein is Tyrosine-protein kinase JAK2 of Sus scrofa (Pig).